The chain runs to 306 residues: Lipoyl synthase (306 aa).

Residues Cys41, Cys46, Cys52, Cys68, Cys72, Cys75, and Ser281 each coordinate [4Fe-4S] cluster. In terms of domain architecture, Radical SAM core spans 54 to 270 (GARRTATFMI…RKVAMDKGFK (217 aa)). A disordered region spans residues 283 to 306 (HADEQVNEAAKEKHRLGEEKLQQN).

It belongs to the radical SAM superfamily. Lipoyl synthase family. It depends on [4Fe-4S] cluster as a cofactor.

Its subcellular location is the cytoplasm. The catalysed reaction is [[Fe-S] cluster scaffold protein carrying a second [4Fe-4S](2+) cluster] + N(6)-octanoyl-L-lysyl-[protein] + 2 oxidized [2Fe-2S]-[ferredoxin] + 2 S-adenosyl-L-methionine + 4 H(+) = [[Fe-S] cluster scaffold protein] + N(6)-[(R)-dihydrolipoyl]-L-lysyl-[protein] + 4 Fe(3+) + 2 hydrogen sulfide + 2 5'-deoxyadenosine + 2 L-methionine + 2 reduced [2Fe-2S]-[ferredoxin]. It participates in protein modification; protein lipoylation via endogenous pathway; protein N(6)-(lipoyl)lysine from octanoyl-[acyl-carrier-protein]. Its function is as follows. Catalyzes the radical-mediated insertion of two sulfur atoms into the C-6 and C-8 positions of the octanoyl moiety bound to the lipoyl domains of lipoate-dependent enzymes, thereby converting the octanoylated domains into lipoylated derivatives. This chain is Lipoyl synthase, found in Staphylococcus haemolyticus (strain JCSC1435).